The following is a 358-amino-acid chain: Photosystem II protein D1 1 (358 aa).

3 helical membrane passes run 28–45, 117–132, and 141–155; these read YVGW…AATI, HFLI…QWEL, and WICV…AAFA. Residue His-117 participates in chlorophyll a binding. Tyr-125 serves as a coordination point for pheophytin a. [CaMn4O5] cluster contacts are provided by Asp-169 and Glu-188. A helical membrane pass occupies residues 196-217; that stretch reads FHMLGVAGVFGGSLFSAMHGSL. A chlorophyll a-binding site is contributed by His-197. A quinone is bound by residues His-214 and 263–264; that span reads SF. Residue His-214 coordinates Fe cation. His-271 lines the Fe cation pocket. The chain crosses the membrane as a helical span at residues 273–287; that stretch reads FLGAWPVIGIWFTSM. [CaMn4O5] cluster is bound by residues His-331, Glu-332, Asp-341, and Ala-343. A propeptide spanning residues 344–358 is cleaved from the precursor; the sequence is AAESTPVALQAPAIG.

It belongs to the reaction center PufL/M/PsbA/D family. PSII is composed of 1 copy each of membrane proteins PsbA, PsbB, PsbC, PsbD, PsbE, PsbF, PsbH, PsbI, PsbJ, PsbK, PsbL, PsbM, PsbT, PsbX, PsbY, PsbZ, Psb30/Ycf12, peripheral proteins PsbO, CyanoQ (PsbQ), PsbU, PsbV and a large number of cofactors. It forms dimeric complexes. The cofactor is The D1/D2 heterodimer binds P680, chlorophylls that are the primary electron donor of PSII, and subsequent electron acceptors. It shares a non-heme iron and each subunit binds pheophytin, quinone, additional chlorophylls, carotenoids and lipids. D1 provides most of the ligands for the Mn4-Ca-O5 cluster of the oxygen-evolving complex (OEC). There is also a Cl(-1) ion associated with D1 and D2, which is required for oxygen evolution. The PSII complex binds additional chlorophylls, carotenoids and specific lipids.. In terms of processing, tyr-160 forms a radical intermediate that is referred to as redox-active TyrZ, YZ or Y-Z. C-terminally processed by CtpA; processing is essential to allow assembly of the oxygen-evolving complex and thus photosynthetic growth.

The protein localises to the cellular thylakoid membrane. It catalyses the reaction 2 a plastoquinone + 4 hnu + 2 H2O = 2 a plastoquinol + O2. Its function is as follows. Photosystem II (PSII) is a light-driven water:plastoquinone oxidoreductase that uses light energy to abstract electrons from H(2)O, generating O(2) and a proton gradient subsequently used for ATP formation. It consists of a core antenna complex that captures photons, and an electron transfer chain that converts photonic excitation into a charge separation. The D1/D2 (PsbA/PsbD) reaction center heterodimer binds P680, the primary electron donor of PSII as well as several subsequent electron acceptors. This chain is Photosystem II protein D1 1, found in Synechococcus sp. (strain CC9902).